The sequence spans 267 residues: Phosphate import ATP-binding protein PstB (267 aa).

The ABC transporter domain occupies 21–262 (VAARNLDFYY…PSKQQTEDYI (242 aa)). 53–60 (GPSGCGKS) serves as a coordination point for ATP.

This sequence belongs to the ABC transporter superfamily. Phosphate importer (TC 3.A.1.7) family. In terms of assembly, the complex is composed of two ATP-binding proteins (PstB), two transmembrane proteins (PstC and PstA) and a solute-binding protein (PstS).

The protein localises to the cell inner membrane. It catalyses the reaction phosphate(out) + ATP + H2O = ADP + 2 phosphate(in) + H(+). In terms of biological role, part of the ABC transporter complex PstSACB involved in phosphate import. Responsible for energy coupling to the transport system. The sequence is that of Phosphate import ATP-binding protein PstB from Xanthomonas euvesicatoria pv. vesicatoria (strain 85-10) (Xanthomonas campestris pv. vesicatoria).